Here is a 231-residue protein sequence, read N- to C-terminus: Probable septum site-determining protein MinC (231 aa).

A disordered region spans residues 102-125 (KEKAPRPAPAPQAPAQNTTPVTKT).

The protein belongs to the MinC family. In terms of assembly, interacts with MinD and FtsZ.

Its function is as follows. Cell division inhibitor that blocks the formation of polar Z ring septums. Rapidly oscillates between the poles of the cell to destabilize FtsZ filaments that have formed before they mature into polar Z rings. Prevents FtsZ polymerization. The polypeptide is Probable septum site-determining protein MinC (Escherichia coli O6:K15:H31 (strain 536 / UPEC)).